A 772-amino-acid chain; its full sequence is Uracil catabolism protein 2 (772 aa).

The tract at residues 1–70 (MDINSNASVS…KKPRKKRKTF (70 aa)) is disordered. The span at 39–51 (HPEDSARAKERSE) shows a compositional bias: basic and acidic residues. Over residues 59–69 (GNKKPRKKRKT) the composition is skewed to basic residues. The zn(2)-C6 fungal-type DNA-binding region spans 72 to 101 (CDTCRRVKTRCDFEPFIGKCYRCNVLQLDC).

Belongs to the URC2 family.

The protein localises to the cytoplasm. Its subcellular location is the nucleus. Functionally, probable transcriptional activator involved in uracil catabolism. The protein is Uracil catabolism protein 2 (URC2) of Saccharomyces cerevisiae (strain ATCC 204508 / S288c) (Baker's yeast).